Here is a 72-residue protein sequence, read N- to C-terminus: Translation initiation factor IF-1 (72 aa).

Residues 1 to 72 (MAKTDLLEVQ…ERGRIVFRHK (72 aa)) form the S1-like domain.

It belongs to the IF-1 family. In terms of assembly, component of the 30S ribosomal translation pre-initiation complex which assembles on the 30S ribosome in the order IF-2 and IF-3, IF-1 and N-formylmethionyl-tRNA(fMet); mRNA recruitment can occur at any time during PIC assembly.

The protein localises to the cytoplasm. One of the essential components for the initiation of protein synthesis. Stabilizes the binding of IF-2 and IF-3 on the 30S subunit to which N-formylmethionyl-tRNA(fMet) subsequently binds. Helps modulate mRNA selection, yielding the 30S pre-initiation complex (PIC). Upon addition of the 50S ribosomal subunit IF-1, IF-2 and IF-3 are released leaving the mature 70S translation initiation complex. This Spiroplasma kunkelii protein is Translation initiation factor IF-1.